The sequence spans 1325 residues: uncharacterized protein (1325 aa).

A signal peptide spans 1–18 (MNRIYRVIWNCTLQVFQA). The N-palmitoyl cysteine moiety is linked to residue Cys-19. Cys-19 is lipidated: S-diacylglycerol cysteine.

To E.coli YfaL.

The protein resides in the cell membrane. This is an uncharacterized protein from Escherichia coli (strain K12).